Reading from the N-terminus, the 297-residue chain is Elongation factor Ts (297 aa).

The involved in Mg(2+) ion dislocation from EF-Tu stretch occupies residues 82 to 85; the sequence is TDFV. The segment covering 223–265 has biased composition (low complexity); that stretch reads AQTAAAAETAPPEVSEPEPAAAVTAEEPTPEPVAAAEQPAEPV. A disordered region spans residues 223-297; it reads AQTAAAAETA…GKSRSNKKKK (75 aa). Residues 286–297 are compositionally biased toward basic residues; it reads SGGKSRSNKKKK.

The protein belongs to the EF-Ts family.

Its subcellular location is the cytoplasm. Associates with the EF-Tu.GDP complex and induces the exchange of GDP to GTP. It remains bound to the aminoacyl-tRNA.EF-Tu.GTP complex up to the GTP hydrolysis stage on the ribosome. This is Elongation factor Ts from Thermosynechococcus vestitus (strain NIES-2133 / IAM M-273 / BP-1).